Here is a 224-residue protein sequence, read N- to C-terminus: UPF0758 protein BLi02933/BL00636 (224 aa).

An MPN domain is found at 102–224 (VIRFPEDAAN…FVSLKEKGYL (123 aa)). 3 residues coordinate Zn(2+): His173, His175, and Asp186. Residues 173 to 186 (HNHPSGDPAPSRED) carry the JAMM motif motif.

It belongs to the UPF0758 family.

This Bacillus licheniformis (strain ATCC 14580 / DSM 13 / JCM 2505 / CCUG 7422 / NBRC 12200 / NCIMB 9375 / NCTC 10341 / NRRL NRS-1264 / Gibson 46) protein is UPF0758 protein BLi02933/BL00636.